Reading from the N-terminus, the 538-residue chain is CTP synthase (538 aa).

Residues 1 to 269 (MSPRKYVIVT…ARLVERRLFG (269 aa)) form an amidoligase domain region. Serine 15 is a CTP binding site. Residue serine 15 participates in UTP binding. 16-21 (SVGKGL) lines the ATP pocket. Position 56 (tyrosine 56) interacts with L-glutamine. Aspartate 73 provides a ligand contact to ATP. Residues aspartate 73 and glutamate 143 each coordinate Mg(2+). CTP is bound by residues 150-152 (DIE), 190-195 (KTKPVQ), and lysine 226. UTP is bound by residues 190 to 195 (KTKPVQ) and lysine 226. One can recognise a Glutamine amidotransferase type-1 domain in the interval 294 to 538 (KVAMVGKYTK…FVTAVARLRG (245 aa)). Glycine 358 provides a ligand contact to L-glutamine. Cysteine 385 acts as the Nucleophile; for glutamine hydrolysis in catalysis. L-glutamine is bound by residues 386–389 (FGMQ), glutamate 409, and arginine 466. Catalysis depends on residues histidine 512 and glutamate 514.

Belongs to the CTP synthase family. As to quaternary structure, homotetramer.

It catalyses the reaction UTP + L-glutamine + ATP + H2O = CTP + L-glutamate + ADP + phosphate + 2 H(+). The enzyme catalyses L-glutamine + H2O = L-glutamate + NH4(+). It carries out the reaction UTP + NH4(+) + ATP = CTP + ADP + phosphate + 2 H(+). The protein operates within pyrimidine metabolism; CTP biosynthesis via de novo pathway; CTP from UDP: step 2/2. Allosterically activated by GTP, when glutamine is the substrate; GTP has no effect on the reaction when ammonia is the substrate. The allosteric effector GTP functions by stabilizing the protein conformation that binds the tetrahedral intermediate(s) formed during glutamine hydrolysis. Inhibited by the product CTP, via allosteric rather than competitive inhibition. Its function is as follows. Catalyzes the ATP-dependent amination of UTP to CTP with either L-glutamine or ammonia as the source of nitrogen. Regulates intracellular CTP levels through interactions with the four ribonucleotide triphosphates. The protein is CTP synthase of Aeropyrum pernix (strain ATCC 700893 / DSM 11879 / JCM 9820 / NBRC 100138 / K1).